A 31-amino-acid polypeptide reads, in one-letter code: Cytochrome b6-f complex subunit 6 (31 aa).

Residues 4–24 (ITSYFGFLLAALTITSALFIG) form a helical membrane-spanning segment.

Belongs to the PetL family. As to quaternary structure, the 4 large subunits of the cytochrome b6-f complex are cytochrome b6, subunit IV (17 kDa polypeptide, PetD), cytochrome f and the Rieske protein, while the 4 small subunits are PetG, PetL, PetM and PetN. The complex functions as a dimer.

It localises to the plastid. It is found in the chloroplast thylakoid membrane. In terms of biological role, component of the cytochrome b6-f complex, which mediates electron transfer between photosystem II (PSII) and photosystem I (PSI), cyclic electron flow around PSI, and state transitions. PetL is important for photoautotrophic growth as well as for electron transfer efficiency and stability of the cytochrome b6-f complex. The protein is Cytochrome b6-f complex subunit 6 of Hamamelis virginiana (Witch-hazel).